Reading from the N-terminus, the 500-residue chain is Glycogen synthase (500 aa).

Position 15 (Lys15) interacts with ADP-alpha-D-glucose.

It belongs to the glycosyltransferase 1 family. Bacterial/plant glycogen synthase subfamily.

The catalysed reaction is [(1-&gt;4)-alpha-D-glucosyl](n) + ADP-alpha-D-glucose = [(1-&gt;4)-alpha-D-glucosyl](n+1) + ADP + H(+). The protein operates within glycan biosynthesis; glycogen biosynthesis. Its function is as follows. Synthesizes alpha-1,4-glucan chains using ADP-glucose. In Protochlamydia amoebophila (strain UWE25), this protein is Glycogen synthase.